A 256-amino-acid polypeptide reads, in one-letter code: Sec-independent protein translocase protein TatC (256 aa).

6 helical membrane-spanning segments follow: residues 25–45 (VICV…IYHF), 77–97 (AIVA…AFIA), 117–137 (ILFY…VFSF), 158–178 (FALA…AIIL), 195–215 (PYII…DVFS), and 217–237 (TLLA…ARFY).

It belongs to the TatC family. In terms of assembly, the Tat system comprises two distinct complexes: a TatABC complex, containing multiple copies of TatA, TatB and TatC subunits, and a separate TatA complex, containing only TatA subunits. Substrates initially bind to the TatABC complex, which probably triggers association of the separate TatA complex to form the active translocon.

It localises to the cell inner membrane. Its function is as follows. Part of the twin-arginine translocation (Tat) system that transports large folded proteins containing a characteristic twin-arginine motif in their signal peptide across membranes. Together with TatB, TatC is part of a receptor directly interacting with Tat signal peptides. The chain is Sec-independent protein translocase protein TatC from Haemophilus influenzae (strain ATCC 51907 / DSM 11121 / KW20 / Rd).